A 356-amino-acid polypeptide reads, in one-letter code: Tyrosine recombinase XerS (356 aa).

Positions 16–121 (IMPWYVLDYY…ALSSLYKYLT (106 aa)) constitute a Core-binding (CB) domain. The region spanning 169–354 (AFLDYVDKEY…VNDEQKNALD (186 aa)) is the Tyr recombinase domain. Catalysis depends on residues R210, K234, H306, R309, and H332. Y341 (O-(3'-phospho-DNA)-tyrosine intermediate) is an active-site residue.

This sequence belongs to the 'phage' integrase family. XerS subfamily.

Its subcellular location is the cytoplasm. With respect to regulation, ftsK is required for recombination. In terms of biological role, site-specific tyrosine recombinase, which acts by catalyzing the cutting and rejoining of the recombining DNA molecules. Essential to convert dimers of the bacterial chromosome into monomers to permit their segregation at cell division. The polypeptide is Tyrosine recombinase XerS (Streptococcus pyogenes serotype M49 (strain NZ131)).